The following is a 132-amino-acid chain: Large ribosomal subunit protein uL14 (132 aa).

It belongs to the universal ribosomal protein uL14 family. Part of the 50S ribosomal subunit. Forms a cluster with proteins L3 and L24e, part of which may contact the 16S rRNA in 2 intersubunit bridges.

Functionally, binds to 23S rRNA. Forms part of two intersubunit bridges in the 70S ribosome. This chain is Large ribosomal subunit protein uL14, found in Picrophilus torridus (strain ATCC 700027 / DSM 9790 / JCM 10055 / NBRC 100828 / KAW 2/3).